Here is a 427-residue protein sequence, read N- to C-terminus: Serine--tRNA ligase (427 aa).

Residue 229–231 (TAE) coordinates L-serine. Position 260-262 (260-262 (RSE)) interacts with ATP. Residue glutamate 283 coordinates L-serine. Residue 347–350 (EISS) coordinates ATP. L-serine is bound at residue serine 383.

Belongs to the class-II aminoacyl-tRNA synthetase family. Type-1 seryl-tRNA synthetase subfamily. As to quaternary structure, homodimer. The tRNA molecule binds across the dimer.

Its subcellular location is the cytoplasm. It catalyses the reaction tRNA(Ser) + L-serine + ATP = L-seryl-tRNA(Ser) + AMP + diphosphate + H(+). It carries out the reaction tRNA(Sec) + L-serine + ATP = L-seryl-tRNA(Sec) + AMP + diphosphate + H(+). It participates in aminoacyl-tRNA biosynthesis; selenocysteinyl-tRNA(Sec) biosynthesis; L-seryl-tRNA(Sec) from L-serine and tRNA(Sec): step 1/1. In terms of biological role, catalyzes the attachment of serine to tRNA(Ser). Is also able to aminoacylate tRNA(Sec) with serine, to form the misacylated tRNA L-seryl-tRNA(Sec), which will be further converted into selenocysteinyl-tRNA(Sec). This Nitrosococcus oceani (strain ATCC 19707 / BCRC 17464 / JCM 30415 / NCIMB 11848 / C-107) protein is Serine--tRNA ligase.